We begin with the raw amino-acid sequence, 632 residues long: Probable potassium transport system protein Kup 1 (632 aa).

Helical transmembrane passes span 17-37, 60-80, 106-126, 146-166, 175-195, 210-230, 254-274, 292-312, 344-364, 370-390, 401-421, and 426-446; these read LFYLALGSVGVVYGDIGTSPL, LISLMIWALTIIVTIKYVLFL, TAILMLLGLMGAALFLGDAMI, LADYIVPISVVILALLFVVQS, FFGPITAVWFLVMAAAGISHI, AVAFLLHEGFYGIVVLGAVFL, WFLLVFPALTLNYLGQGALVL, ALLPVVILATAATIIASQAVI, IFVPSVNAVLFIGVIFLVLGF, LATAYGISVTGAMVVTSIMAF, LPVAVIALAPLVVLEMIFLGA, and IHDGGYIPIMIATAFTVVMWT.

This sequence belongs to the HAK/KUP transporter (TC 2.A.72) family.

Its subcellular location is the cell inner membrane. The catalysed reaction is K(+)(in) + H(+)(in) = K(+)(out) + H(+)(out). Transport of potassium into the cell. Likely operates as a K(+):H(+) symporter. The protein is Probable potassium transport system protein Kup 1 of Rhizobium johnstonii (strain DSM 114642 / LMG 32736 / 3841) (Rhizobium leguminosarum bv. viciae).